The sequence spans 249 residues: Carboxy-S-adenosyl-L-methionine synthase (249 aa).

S-adenosyl-L-methionine is bound by residues tyrosine 39, 64–66 (GCS), 117–118 (DI), asparagine 132, and arginine 199.

The protein belongs to the class I-like SAM-binding methyltransferase superfamily. Cx-SAM synthase family. In terms of assembly, homodimer.

It catalyses the reaction prephenate + S-adenosyl-L-methionine = carboxy-S-adenosyl-L-methionine + 3-phenylpyruvate + H2O. In terms of biological role, catalyzes the conversion of S-adenosyl-L-methionine (SAM) to carboxy-S-adenosyl-L-methionine (Cx-SAM). The protein is Carboxy-S-adenosyl-L-methionine synthase of Aeromonas hydrophila subsp. hydrophila (strain ATCC 7966 / DSM 30187 / BCRC 13018 / CCUG 14551 / JCM 1027 / KCTC 2358 / NCIMB 9240 / NCTC 8049).